We begin with the raw amino-acid sequence, 105 residues long: Large ribosomal subunit protein eL36 (105 aa).

It belongs to the eukaryotic ribosomal protein eL36 family. In terms of assembly, component of the large ribosomal subunit.

Its subcellular location is the cytoplasm. It is found in the cytosol. Functionally, component of the large ribosomal subunit. The ribosome is a large ribonucleoprotein complex responsible for the synthesis of proteins in the cell. This is Large ribosomal subunit protein eL36 (RPL36) from Hydrophis hardwickii (Hardwick's spine-bellied seasnake).